Consider the following 159-residue polypeptide: Cyclic pyranopterin monophosphate synthase (159 aa).

Residues 75–77 (LCH) and 113–114 (ME) contribute to the substrate site. Residue aspartate 128 is part of the active site.

The protein belongs to the MoaC family. Homohexamer; trimer of dimers.

It carries out the reaction (8S)-3',8-cyclo-7,8-dihydroguanosine 5'-triphosphate = cyclic pyranopterin phosphate + diphosphate. Its pathway is cofactor biosynthesis; molybdopterin biosynthesis. Functionally, catalyzes the conversion of (8S)-3',8-cyclo-7,8-dihydroguanosine 5'-triphosphate to cyclic pyranopterin monophosphate (cPMP). The protein is Cyclic pyranopterin monophosphate synthase of Cereibacter sphaeroides (strain ATCC 17029 / ATH 2.4.9) (Rhodobacter sphaeroides).